Consider the following 280-residue polypeptide: Large ribosomal subunit protein uL2cz/uL2cy (280 aa).

Disordered stretches follow at residues 1-25 and 231-280; these read MAIHLYKTSTPSTRNGAVDSQVKSN and PVDH…RRTK.

Belongs to the universal ribosomal protein uL2 family. In terms of assembly, part of the 50S ribosomal subunit.

It localises to the plastid. It is found in the chloroplast. The chain is Large ribosomal subunit protein uL2cz/uL2cy (rpl2-A) from Platanus occidentalis (Sycamore).